The primary structure comprises 449 residues: Serine--tRNA ligase (449 aa).

Residue T256 to E258 coordinates L-serine. R287–E289 lines the ATP pocket. Residue E310 participates in L-serine binding. E374 to S377 provides a ligand contact to ATP. S410 contributes to the L-serine binding site.

This sequence belongs to the class-II aminoacyl-tRNA synthetase family. Type-1 seryl-tRNA synthetase subfamily. As to quaternary structure, homodimer. The tRNA molecule binds across the dimer.

It localises to the cytoplasm. It catalyses the reaction tRNA(Ser) + L-serine + ATP = L-seryl-tRNA(Ser) + AMP + diphosphate + H(+). The catalysed reaction is tRNA(Sec) + L-serine + ATP = L-seryl-tRNA(Sec) + AMP + diphosphate + H(+). It participates in aminoacyl-tRNA biosynthesis; selenocysteinyl-tRNA(Sec) biosynthesis; L-seryl-tRNA(Sec) from L-serine and tRNA(Sec): step 1/1. Catalyzes the attachment of serine to tRNA(Ser). Is also able to aminoacylate tRNA(Sec) with serine, to form the misacylated tRNA L-seryl-tRNA(Sec), which will be further converted into selenocysteinyl-tRNA(Sec). The sequence is that of Serine--tRNA ligase from Xanthomonas oryzae pv. oryzae (strain MAFF 311018).